The following is a 1047-amino-acid chain: Oleate-activated transcription factor 1 (1047 aa).

The interval 1 to 56 (MVENSTQKAPHAGNDDNSSTKPYSEAFFLGFNNPTPGLEAEHSSTSPAPENSETHN) is disordered. Positions 66–93 (CQACRKSKTKCDREKPECGRCVKHGLKC) form a DNA-binding region, zn(2)-C6 fungal-type. Residues 133–163 (REVNESGKRSASPINTNNASGDSPDTKKQHK) are disordered. Positions 144–155 (SPINTNNASGDS) are enriched in polar residues. Ser-155 bears the Phosphoserine mark. The short motif at 1034 to 1042 (DLFDYDFLF) is the 9aaTAD element.

Heterodimer of PIP2 and OAF1.

It is found in the nucleus. Functionally, the PIP2-OAF1 heterodimer acts as a transcriptional activator to induce the transcription of genes encoding proteins involved in fatty acid beta-oxidation, a response called oleic acid induction, when cells grow on fatty acids as sole carbon source. Recognizes and binds to the oleate response element (ORE) (or peroxisome box), two inverted CGG triplets spaced by 14 to 18 intervening nucleotides, in the promoter region of a number of genes (such as CTA1, FOX1 to FOX3, FAA2, PAS8, PAS10, etc.) for peroxisomal proteins. OAF1 acts as the sensor for oleate and inhibits PIP2 activity under non-inducing conditions. Activity is repressed by glucose. This Saccharomyces cerevisiae (strain ATCC 204508 / S288c) (Baker's yeast) protein is Oleate-activated transcription factor 1 (OAF1).